Reading from the N-terminus, the 114-residue chain is Cytochrome c oxidase subunit 7A2-like, mitochondrial (114 aa).

The N-terminal 55 residues, 1 to 55 (MYYKFSGFTQKLAGAWASDAYSPQGLRPVVSTEAPPIIFATPTKLSSGPTAYDYA), are a transit peptide targeting the mitochondrion. An N6-acetyllysine modification is found at Lys-69. A helical membrane pass occupies residues 82 to 107 (PDQMLYRTTMALTVGGTIYCLIALYM).

The protein belongs to the cytochrome c oxidase VIIa family. In terms of assembly, interacts with the mitochondrial respiratory complexes III (CIII) and IV (CIV), promoting their association.

It localises to the mitochondrion inner membrane. Assembly factor that mediates the formation of some mitochondrial respiratory supercomplexes (respirasomes), thereby promoting oxidative phosphorylation and energy metabolism. Acts as a molecular adapter that associates with both mitochondrial respiratory complexes III (CIII) and IV (CIV), promoting their association. Mediates the formation of various mitochondrial respiratory supercomplexes, such as MCIII(2)IV(2), composed of two CIII and two CIV, and the CS-respirasome (MCI(1)III(2)IV(2)), composed of one CI, two CIII and two CIV. Not involved in the formation of the canonical respirasome (MCI(1)III(2)IV(1)), composed of one CI, two CIII and one CIV. The formation of different respirasomes is important for cell adaptation to oxygen conditions and prevent metabolic exhaustion: supercomplexes mediated by COX7A2L/SCAF1 are required to maintain oxidative phosphorylation upon low oxygen conditions and promote metabolic rewiring toward glycolysis. In Bos taurus (Bovine), this protein is Cytochrome c oxidase subunit 7A2-like, mitochondrial.